The chain runs to 378 residues: Alanine racemase (378 aa).

Lysine 40 (proton acceptor; specific for D-alanine) is an active-site residue. Lysine 40 carries the N6-(pyridoxal phosphate)lysine modification. A substrate-binding site is contributed by arginine 140. Catalysis depends on tyrosine 270, which acts as the Proton acceptor; specific for L-alanine. Residue methionine 317 coordinates substrate.

It belongs to the alanine racemase family. Requires pyridoxal 5'-phosphate as cofactor.

It carries out the reaction L-alanine = D-alanine. The protein operates within amino-acid biosynthesis; D-alanine biosynthesis; D-alanine from L-alanine: step 1/1. Catalyzes the interconversion of L-alanine and D-alanine. May also act on other amino acids. This chain is Alanine racemase (alr), found in Lacticaseibacillus paracasei (strain ATCC 334 / BCRC 17002 / CCUG 31169 / CIP 107868 / KCTC 3260 / NRRL B-441) (Lactobacillus paracasei).